A 198-amino-acid chain; its full sequence is LexA repressor (198 aa).

Residues 28-47 constitute a DNA-binding region (H-T-H motif); it reads IRDIAKHFKLTPRGAHIHVL. Catalysis depends on for autocatalytic cleavage activity residues serine 120 and lysine 157.

This sequence belongs to the peptidase S24 family. In terms of assembly, homodimer.

The catalysed reaction is Hydrolysis of Ala-|-Gly bond in repressor LexA.. Its function is as follows. Represses a number of genes involved in the response to DNA damage (SOS response), including recA and lexA. In the presence of single-stranded DNA, RecA interacts with LexA causing an autocatalytic cleavage which disrupts the DNA-binding part of LexA, leading to derepression of the SOS regulon and eventually DNA repair. This Thermosipho africanus (strain TCF52B) protein is LexA repressor.